Consider the following 247-residue polypeptide: Large ribosomal subunit protein uL30 (247 aa).

N-acetylmethionine is present on M1. Repeat copies occupy residues 7–17, 18–29, 30–41, and 42–53. Residues 7–53 are 4 X 12 AA tandem repeats; sequence KKKVPAVPETLKKKRRNFAELKIKRLRKKFAQKMLRKARRKLIYEKA. T16 bears the Phosphothreonine mark. K123 carries the post-translational modification N6-acetyllysine. Position 126 is an N6-succinyllysine (K126). A Phosphotyrosine modification is found at Y138.

Belongs to the universal ribosomal protein uL30 family. In terms of assembly, component of the large ribosomal subunit. Homodimer. Interacts with DHX33.

It is found in the cytoplasm. Component of the large ribosomal subunit. The ribosome is a large ribonucleoprotein complex responsible for the synthesis of proteins in the cell. Binds to G-rich structures in 28S rRNA and in mRNAs. Plays a regulatory role in the translation apparatus; inhibits cell-free translation of mRNAs. In Macaca fascicularis (Crab-eating macaque), this protein is Large ribosomal subunit protein uL30 (RPL7).